A 446-amino-acid chain; its full sequence is 3-phosphoshikimate 1-carboxyvinyltransferase (446 aa).

The 3-phosphoshikimate site is built by lysine 30, serine 31, and arginine 35. Position 30 (lysine 30) interacts with phosphoenolpyruvate. Residues glycine 112 and arginine 140 each coordinate phosphoenolpyruvate. Serine 186, serine 187, glutamine 188, serine 215, glutamate 334, and histidine 361 together coordinate 3-phosphoshikimate. Phosphoenolpyruvate is bound at residue glutamine 188. Glutamate 334 (proton acceptor) is an active-site residue. Residues arginine 365, arginine 406, and lysine 431 each contribute to the phosphoenolpyruvate site.

Belongs to the EPSP synthase family. In terms of assembly, monomer.

It localises to the cytoplasm. It catalyses the reaction 3-phosphoshikimate + phosphoenolpyruvate = 5-O-(1-carboxyvinyl)-3-phosphoshikimate + phosphate. The protein operates within metabolic intermediate biosynthesis; chorismate biosynthesis; chorismate from D-erythrose 4-phosphate and phosphoenolpyruvate: step 6/7. Functionally, catalyzes the transfer of the enolpyruvyl moiety of phosphoenolpyruvate (PEP) to the 5-hydroxyl of shikimate-3-phosphate (S3P) to produce enolpyruvyl shikimate-3-phosphate and inorganic phosphate. In Streptomyces avermitilis (strain ATCC 31267 / DSM 46492 / JCM 5070 / NBRC 14893 / NCIMB 12804 / NRRL 8165 / MA-4680), this protein is 3-phosphoshikimate 1-carboxyvinyltransferase.